The primary structure comprises 169 residues: Succinate dehydrogenase cytochrome b560 subunit, mitochondrial (169 aa).

Residues 1 to 29 constitute a mitochondrion transit peptide; sequence MAALLLRHVGRHCLRAHLSPQLCIRNAVP. The Mitochondrial matrix segment spans residues 30 to 62; it reads LGTTAKEEMERFWSKNTTLNRPLSPHISIYGWS. The helical transmembrane segment at 63–92 threads the bilayer; sequence LPMAMSICHRGTGIALSAGVSLFGLSALLV. Topologically, residues 93-112 are mitochondrial intermembrane; sequence PGSFESHLEFVKSLCLGPAL. A helical transmembrane segment spans residues 113-137; sequence IHTAKFALVFPLMYHTWNGIRHLMW. Position 127 (His127) interacts with heme b. At 138–144 the chain is on the mitochondrial matrix side; the sequence is DLGKGLT. A helical transmembrane segment spans residues 145 to 166; it reads ISQLHQSGVAVLVLTVLSSVGL. The Mitochondrial intermembrane portion of the chain corresponds to 167-169; it reads AAM.

The protein belongs to the cytochrome b560 family. In terms of assembly, component of complex II composed of four subunits: the flavoprotein (FP) SDHA, iron-sulfur protein (IP) SDHB, and a cytochrome b560 composed of SDHC and SDHD. The cofactor is heme b. The N-terminus is blocked.

It localises to the mitochondrion inner membrane. It functions in the pathway carbohydrate metabolism; tricarboxylic acid cycle. Functionally, membrane-anchoring subunit of succinate dehydrogenase (SDH) that is involved in complex II of the mitochondrial electron transport chain and is responsible for transferring electrons from succinate to ubiquinone (coenzyme Q). SDH also oxidizes malate to the non-canonical enol form of oxaloacetate, enol-oxaloacetate. Enol-oxaloacetate, which is a potent inhibitor of the succinate dehydrogenase activity, is further isomerized into keto-oxaloacetate. This Bos taurus (Bovine) protein is Succinate dehydrogenase cytochrome b560 subunit, mitochondrial (SDHC).